The primary structure comprises 702 residues: Elongation factor G (702 aa).

A tr-type G domain is found at 8 to 290 (ERYRNIGISA…AVIDYLPSPV (283 aa)). Residues 17 to 24 (AHIDAGKT), 88 to 92 (DTPGH), and 142 to 145 (NKMD) contribute to the GTP site.

The protein belongs to the TRAFAC class translation factor GTPase superfamily. Classic translation factor GTPase family. EF-G/EF-2 subfamily.

It is found in the cytoplasm. Functionally, catalyzes the GTP-dependent ribosomal translocation step during translation elongation. During this step, the ribosome changes from the pre-translocational (PRE) to the post-translocational (POST) state as the newly formed A-site-bound peptidyl-tRNA and P-site-bound deacylated tRNA move to the P and E sites, respectively. Catalyzes the coordinated movement of the two tRNA molecules, the mRNA and conformational changes in the ribosome. This Acidovorax ebreus (strain TPSY) (Diaphorobacter sp. (strain TPSY)) protein is Elongation factor G.